The sequence spans 301 residues: Glycine--tRNA ligase alpha subunit (301 aa).

The protein belongs to the class-II aminoacyl-tRNA synthetase family. As to quaternary structure, tetramer of two alpha and two beta subunits.

The protein resides in the cytoplasm. It carries out the reaction tRNA(Gly) + glycine + ATP = glycyl-tRNA(Gly) + AMP + diphosphate. The polypeptide is Glycine--tRNA ligase alpha subunit (Polaromonas sp. (strain JS666 / ATCC BAA-500)).